The sequence spans 433 residues: Trigger factor (433 aa).

The PPIase FKBP-type domain maps to 163-248 (GDTVNIDFSG…VNEIKFKEVP (86 aa)).

Belongs to the FKBP-type PPIase family. Tig subfamily.

The protein resides in the cytoplasm. It carries out the reaction [protein]-peptidylproline (omega=180) = [protein]-peptidylproline (omega=0). Involved in protein export. Acts as a chaperone by maintaining the newly synthesized protein in an open conformation. Functions as a peptidyl-prolyl cis-trans isomerase. The sequence is that of Trigger factor from Staphylococcus aureus (strain bovine RF122 / ET3-1).